We begin with the raw amino-acid sequence, 383 residues long: Transposase InsI for insertion sequence element IS30C (383 aa).

The Integrase catalytic domain occupies 213 to 379 (VNGTPIHERS…TPKEIIERGV (167 aa)).

The protein belongs to the transposase IS30 family.

Required for the transposition of the insertion element. The sequence is that of Transposase InsI for insertion sequence element IS30C (insI3) from Escherichia coli (strain K12).